The primary structure comprises 222 residues: Pyridoxine/pyridoxamine 5'-phosphate oxidase (222 aa).

Residues arginine 69 to lysine 74, tyrosine 84 to threonine 85, lysine 91, and glutamine 113 contribute to the FMN site. Residue lysine 74 participates in substrate binding. Substrate contacts are provided by tyrosine 131, arginine 135, and serine 139. Residues glutamine 148 to serine 149 and tryptophan 193 contribute to the FMN site. Arginine 199–histidine 201 contacts substrate. Arginine 203 is a binding site for FMN.

The protein belongs to the pyridoxamine 5'-phosphate oxidase family. In terms of assembly, homodimer. FMN serves as cofactor.

It carries out the reaction pyridoxamine 5'-phosphate + O2 + H2O = pyridoxal 5'-phosphate + H2O2 + NH4(+). The enzyme catalyses pyridoxine 5'-phosphate + O2 = pyridoxal 5'-phosphate + H2O2. Its pathway is cofactor metabolism; pyridoxal 5'-phosphate salvage; pyridoxal 5'-phosphate from pyridoxamine 5'-phosphate: step 1/1. The protein operates within cofactor metabolism; pyridoxal 5'-phosphate salvage; pyridoxal 5'-phosphate from pyridoxine 5'-phosphate: step 1/1. Catalyzes the oxidation of either pyridoxine 5'-phosphate (PNP) or pyridoxamine 5'-phosphate (PMP) into pyridoxal 5'-phosphate (PLP). This is Pyridoxine/pyridoxamine 5'-phosphate oxidase from Maricaulis maris (strain MCS10) (Caulobacter maris).